The sequence spans 273 residues: Putative phosphoenolpyruvate synthase regulatory protein (273 aa).

153–160 (AVSRAGKT) is an ADP binding site.

The protein belongs to the pyruvate, phosphate/water dikinase regulatory protein family. PSRP subfamily.

It catalyses the reaction [pyruvate, water dikinase] + ADP = [pyruvate, water dikinase]-phosphate + AMP + H(+). The enzyme catalyses [pyruvate, water dikinase]-phosphate + phosphate + H(+) = [pyruvate, water dikinase] + diphosphate. Its function is as follows. Bifunctional serine/threonine kinase and phosphorylase involved in the regulation of the phosphoenolpyruvate synthase (PEPS) by catalyzing its phosphorylation/dephosphorylation. This chain is Putative phosphoenolpyruvate synthase regulatory protein, found in Xanthomonas axonopodis pv. citri (strain 306).